The sequence spans 243 residues: 1-(5-phosphoribosyl)-5-[(5-phosphoribosylamino)methylideneamino] imidazole-4-carboxamide isomerase (243 aa).

Residue D8 is the Proton acceptor of the active site. The active-site Proton donor is D130.

This sequence belongs to the HisA/HisF family.

The protein localises to the cytoplasm. The enzyme catalyses 1-(5-phospho-beta-D-ribosyl)-5-[(5-phospho-beta-D-ribosylamino)methylideneamino]imidazole-4-carboxamide = 5-[(5-phospho-1-deoxy-D-ribulos-1-ylimino)methylamino]-1-(5-phospho-beta-D-ribosyl)imidazole-4-carboxamide. It participates in amino-acid biosynthesis; L-histidine biosynthesis; L-histidine from 5-phospho-alpha-D-ribose 1-diphosphate: step 4/9. This chain is 1-(5-phosphoribosyl)-5-[(5-phosphoribosylamino)methylideneamino] imidazole-4-carboxamide isomerase, found in Ruthia magnifica subsp. Calyptogena magnifica.